The sequence spans 135 residues: Large ribosomal subunit protein uL16c (135 aa).

This sequence belongs to the universal ribosomal protein uL16 family. Part of the 50S ribosomal subunit.

It localises to the plastid. Its subcellular location is the chloroplast. This chain is Large ribosomal subunit protein uL16c, found in Lactuca sativa (Garden lettuce).